The chain runs to 721 residues: Quinolinate synthase, chloroplastic (721 aa).

Residues 1 to 67 constitute a chloroplast transit peptide; it reads MDAANLVMKS…KIPSNNSTFT (67 aa). Catalysis depends on Cys-133, which acts as the Cysteine persulfide intermediate. 2 residues coordinate iminosuccinate: His-283 and Ser-309. Cys-363 is a [4Fe-4S] cluster binding site. Iminosuccinate is bound by residues 392 to 394 and Ser-414; that span reads YIN. A [4Fe-4S] cluster-binding site is contributed by Cys-487. Residues 513–515 and Thr-538 contribute to the iminosuccinate site; that span reads HFE. Cys-643 contacts [4Fe-4S] cluster.

The protein belongs to the quinolinate synthase family. Type 1 subfamily. As to quaternary structure, homodimer. It depends on [4Fe-4S] cluster as a cofactor.

It localises to the plastid. Its subcellular location is the chloroplast. The enzyme catalyses iminosuccinate + dihydroxyacetone phosphate = quinolinate + phosphate + 2 H2O + H(+). Its pathway is alkaloid biosynthesis; nicotine biosynthesis. It participates in cofactor biosynthesis; NAD(+) biosynthesis; quinolinate from iminoaspartate: step 1/1. Its function is as follows. Involved in the biosynthesis of pyridine alkaloid natural products, leading mainly to the production of anabasine, anatabine, nicotine and nornicotine, effective deterrents against herbivores with antiparasitic and pesticide properties (neurotoxins); nornicotine serves as the precursor in the synthesis of the carcinogen compound N'-nitrosonornicotine (NNN). Catalyzes the condensation of iminoaspartate with dihydroxyacetone phosphate to form quinolinate. The protein is Quinolinate synthase, chloroplastic of Nicotiana tabacum (Common tobacco).